Here is a 339-residue protein sequence, read N- to C-terminus: Biotin synthase (339 aa).

One can recognise a Radical SAM core domain in the interval 55 to 282 (NAVQLSTLLS…KAVVRLSAGR (228 aa)). Positions 70, 74, and 77 each coordinate [4Fe-4S] cluster. [2Fe-2S] cluster is bound by residues Cys114, Cys145, Cys205, and Arg277.

Belongs to the radical SAM superfamily. Biotin synthase family. In terms of assembly, homodimer. [4Fe-4S] cluster serves as cofactor. [2Fe-2S] cluster is required as a cofactor.

It catalyses the reaction (4R,5S)-dethiobiotin + (sulfur carrier)-SH + 2 reduced [2Fe-2S]-[ferredoxin] + 2 S-adenosyl-L-methionine = (sulfur carrier)-H + biotin + 2 5'-deoxyadenosine + 2 L-methionine + 2 oxidized [2Fe-2S]-[ferredoxin]. The protein operates within cofactor biosynthesis; biotin biosynthesis; biotin from 7,8-diaminononanoate: step 2/2. Functionally, catalyzes the conversion of dethiobiotin (DTB) to biotin by the insertion of a sulfur atom into dethiobiotin via a radical-based mechanism. This chain is Biotin synthase, found in Burkholderia orbicola (strain MC0-3).